Here is a 241-residue protein sequence, read N- to C-terminus: Uridylate kinase (241 aa).

ATP is bound by residues 15–18 (KLSG), Gly58, and Arg62. UMP is bound by residues Asp77 and 138-145 (TGNPYFTT). The ATP site is built by Thr165, Tyr171, and Asp174.

The protein belongs to the UMP kinase family. In terms of assembly, homohexamer.

The protein resides in the cytoplasm. The catalysed reaction is UMP + ATP = UDP + ADP. The protein operates within pyrimidine metabolism; CTP biosynthesis via de novo pathway; UDP from UMP (UMPK route): step 1/1. With respect to regulation, inhibited by UTP. Functionally, catalyzes the reversible phosphorylation of UMP to UDP. This chain is Uridylate kinase, found in Desulfotalea psychrophila (strain LSv54 / DSM 12343).